Consider the following 376-residue polypeptide: Putative 12-oxophytodienoate reductase 13 (376 aa).

FMN is bound by residues 25–27 (PLT), alanine 58, and glutamine 99. 165–168 (HGAH) lines the substrate pocket. Residues arginine 217, glycine 301, and 322–323 (GR) contribute to the FMN site.

It belongs to the NADH:flavin oxidoreductase/NADH oxidase family. FMN is required as a cofactor.

Putative oxophytodienoate reductase that may be involved in the biosynthesis or metabolism of oxylipin signaling molecules. The chain is Putative 12-oxophytodienoate reductase 13 (OPR13) from Oryza sativa subsp. japonica (Rice).